Reading from the N-terminus, the 265-residue chain is Mlc titration factor A (265 aa).

4 residues coordinate Zn(2+): histidine 111, histidine 148, histidine 152, and glutamate 211.

The protein belongs to the MtfA family. Interacts with Mlc. Zn(2+) is required as a cofactor.

It localises to the cytoplasm. Its function is as follows. Involved in the modulation of the activity of the glucose-phosphotransferase system (glucose-PTS). Interacts with the transcriptional repressor Mlc, preventing its interaction with DNA and leading to the modulation of expression of genes regulated by Mlc, including ptsG, which encodes the PTS system glucose-specific EIICB component. Functionally, shows zinc-dependent metallopeptidase activity. The chain is Mlc titration factor A from Salmonella agona (strain SL483).